The chain runs to 307 residues: Elongation factor Ts (307 aa).

The involved in Mg(2+) ion dislocation from EF-Tu stretch occupies residues 80–83; it reads TDFV.

Belongs to the EF-Ts family.

The protein localises to the cytoplasm. Associates with the EF-Tu.GDP complex and induces the exchange of GDP to GTP. It remains bound to the aminoacyl-tRNA.EF-Tu.GTP complex up to the GTP hydrolysis stage on the ribosome. The chain is Elongation factor Ts from Bradyrhizobium diazoefficiens (strain JCM 10833 / BCRC 13528 / IAM 13628 / NBRC 14792 / USDA 110).